The primary structure comprises 450 residues: MDKKINLDYLIDDIIVNSDDLTPFQCQICFNSVIDFKKETLSFDVLQCRNGHISCHECWNRQLSIKQECPSCKVKTLPSELSRNIFLENAFRALKVICPNKFKESKFQGEAVHCENGCPEILKVELLEHHLKECQYQFIKCPNNSNKCKYIIRKNQIEHHNQSVCDYSLIQCEKCSELIERKKLNKHIESECDTLMITCSKCSASIGKKLMNHHLETDCPMEEISCLYKAGGCNKRFLRSQLSQHLSENNNHIFYIQNVMDLHKLQLDECNQDYRKLEKQNRDLEKRLFYLESTVNSTVINSKPHECGGGGGGGSGNNVYKGKWVINNWDRKLREYPISKSLNSPFFQIGSSKFFIMLYPNGNNEVKGFLSIFLYKIYDRPSLVKYSLEAKNIDPTKNYKNTHTNNFINNNGNGWFKWIENKSQNGFFSNNSLTISISIKIIQDHSLVTE.

The RING-type; degenerate zinc-finger motif lies at 26 to 73 (CQICFNSVIDFKKETLSFDVLQCRNGHISCHECWNRQLSIKQECPSCK). TRAF-type zinc fingers lie at residues 129–185 (HHLK…KKLN) and 186–243 (KHIE…SQLS). Residues 257–297 (QNVMDLHKLQLDECNQDYRKLEKQNRDLEKRLFYLESTVNS) are a coiled coil. The region spanning 319–439 (VYKGKWVINN…NNSLTISISI (121 aa)) is the MATH domain.

Belongs to the TNF receptor-associated factor family. A subfamily.

Its subcellular location is the cytoplasm. In terms of biological role, probable adapter protein and signal transducer that links members of the tumor necrosis factor receptor family to different signaling pathways by association with the receptor cytoplasmic domain and kinases. The polypeptide is TNF receptor-associated factor family protein DDB_G0273433/DDB_G0273509 (Dictyostelium discoideum (Social amoeba)).